The sequence spans 139 residues: Protein Turandot B (139 aa).

An N-terminal signal peptide occupies residues 1-21 (MNFKTALICFALLLIGTLCSA).

It belongs to the Turandot family.

It localises to the secreted. Its function is as follows. A humoral factor that may play a role in stress tolerance. The chain is Protein Turandot B from Drosophila simulans (Fruit fly).